Consider the following 406-residue polypeptide: Putative nickel insertion protein (406 aa).

Belongs to the LarC family.

This chain is Putative nickel insertion protein, found in Methanosphaera stadtmanae (strain ATCC 43021 / DSM 3091 / JCM 11832 / MCB-3).